Reading from the N-terminus, the 359-residue chain is ATP-dependent 6-phosphofructokinase 1 (359 aa).

ATP-binding positions include Gly14, 78 to 79 (KG), and 115 to 118 (GDGS). Asp116 contacts Mg(2+). Substrate is bound by residues 139–141 (TID), Arg176, 183–185 (MGR), Glu236, Arg277, and 283–286 (HIQR). Asp141 serves as the catalytic Proton acceptor.

This sequence belongs to the phosphofructokinase type A (PFKA) family. Mixed-substrate PFK group III subfamily. In terms of assembly, homodimer or homotetramer. The cofactor is Mg(2+).

The protein resides in the cytoplasm. It carries out the reaction beta-D-fructose 6-phosphate + ATP = beta-D-fructose 1,6-bisphosphate + ADP + H(+). It participates in carbohydrate degradation; glycolysis; D-glyceraldehyde 3-phosphate and glycerone phosphate from D-glucose: step 3/4. Catalyzes the phosphorylation of D-fructose 6-phosphate to fructose 1,6-bisphosphate by ATP, the first committing step of glycolysis. This chain is ATP-dependent 6-phosphofructokinase 1, found in Nostoc sp. (strain PCC 7120 / SAG 25.82 / UTEX 2576).